The following is a 470-amino-acid chain: Probable citrate synthase, mitochondrial (470 aa).

Catalysis depends on residues His-297, His-351, and Asp-406.

This sequence belongs to the citrate synthase family. As to quaternary structure, homodimer.

It localises to the mitochondrion matrix. The enzyme catalyses oxaloacetate + acetyl-CoA + H2O = citrate + CoA + H(+). The protein operates within carbohydrate metabolism; tricarboxylic acid cycle; isocitrate from oxaloacetate: step 1/2. The polypeptide is Probable citrate synthase, mitochondrial (Leishmania major).